The primary structure comprises 753 residues: Translation initiation factor IF-2 (753 aa).

The disordered stretch occupies residues 1-166; sequence MSEKPRRDTG…PVMRPRGPVA (166 aa). Composition is skewed to low complexity over residues 19 to 43, 71 to 81, and 102 to 122; these read STGQ…ATGA, NARPAAPANAR, and TPAP…TNTR. The span at 133-146 shows a compositional bias: basic and acidic residues; sequence PQPEEREREREAVL. Positions 153–162 are enriched in low complexity; that stretch reads TTTRPVMRPR. Residues 249–418 form the tr-type G domain; that stretch reads PRPPVVTIMG…LLVADLEDLR (170 aa). A G1 region spans residues 258-265; it reads GHVDHGKT. A GTP-binding site is contributed by 258–265; the sequence is GHVDHGKT. Residues 283 to 287 are G2; the sequence is GITQH. The G3 stretch occupies residues 304-307; it reads DTPG. Residues 304–308 and 358–361 each bind GTP; these read DTPGH and NKID. Residues 358–361 are G4; that stretch reads NKID. Positions 394–396 are G5; it reads SAR.

The protein belongs to the TRAFAC class translation factor GTPase superfamily. Classic translation factor GTPase family. IF-2 subfamily.

Its subcellular location is the cytoplasm. Functionally, one of the essential components for the initiation of protein synthesis. Protects formylmethionyl-tRNA from spontaneous hydrolysis and promotes its binding to the 30S ribosomal subunits. Also involved in the hydrolysis of GTP during the formation of the 70S ribosomal complex. This Chloroflexus aggregans (strain MD-66 / DSM 9485) protein is Translation initiation factor IF-2.